Here is a 253-residue protein sequence, read N- to C-terminus: Peptidase inhibitor R3HDML (253 aa).

The signal sequence occupies residues 1 to 23 (MPLLSSIVGLTGLLLWMGHTVGA). Positions 24 to 56 (LRMPNTTLVQGRPKNTAVWPLSGLGVPRHRRKR) are excised as a propeptide. N28 and N120 each carry an N-linked (GlcNAc...) asparagine glycan. The SCP domain occupies 67 to 207 (LDYHNHIRAS…QQAVYLVCNY (141 aa)).

This sequence belongs to the CRISP family.

It is found in the secreted. In terms of biological role, putative serine protease inhibitor. The protein is Peptidase inhibitor R3HDML (R3hdml) of Mus musculus (Mouse).